Here is a 359-residue protein sequence, read N- to C-terminus: Lipopolysaccharide 1,6-galactosyltransferase (359 aa).

UDP contacts are provided by Gln244 and Glu276.

Belongs to the glycosyltransferase group 1 family. Glycosyltransferase 4 subfamily.

The catalysed reaction is alpha-D-Glc-(1-&gt;3)-[L-alpha-D-Hep-(1-&gt;7)]-4-O-PO3(2-)-L-alpha-D-Hep-(1-&gt;3)-4-O-PO3(2-)-L-alpha-D-Hep-(1-&gt;5)-[alpha-Kdo-(2-&gt;4)]-alpha-Kdo-(2-&gt;6)-lipid A + UDP-alpha-D-galactose = alpha-D-Gal-(1-&gt;6)-alpha-D-Glc-(1-&gt;3)-[L-alpha-D-Hep-(1-&gt;7)]-4-O-PO3(2-)-L-alpha-D-Hep-(1-&gt;3)-4-O-PO3(2-)-L-alpha-D-Hep-(1-&gt;5)-[alpha-Kdo-(2-&gt;4)]-alpha-Kdo-(2-&gt;6)-lipid A + UDP + H(+). Its pathway is bacterial outer membrane biogenesis; LPS core biosynthesis. Its function is as follows. Galactosyltransferase involved in the biosynthesis of the core oligosaccharide region of lipopolysaccharide (LPS). Catalyzes the addition of galactose from UDP-galactose to the first glucose residue of the LPS outer core. This is Lipopolysaccharide 1,6-galactosyltransferase from Salmonella typhimurium (strain LT2 / SGSC1412 / ATCC 700720).